A 431-amino-acid polypeptide reads, in one-letter code: Bone morphogenetic protein 7 (431 aa).

The N-terminal stretch at 1–29 (MHVRSLRAAAPHSFVALWAPLFLLRSALA) is a signal peptide. The propeptide occupies 30–292 (DFSLDNEVHS…ATEVHFRSIR (263 aa)). Residues asparagine 187, asparagine 302, asparagine 321, and asparagine 372 are each glycosylated (N-linked (GlcNAc...) asparagine). Residues 291–311 (IRSTGSKQRSQNRSKTPKNQE) are disordered. 3 cysteine pairs are disulfide-bonded: cysteine 330–cysteine 396, cysteine 359–cysteine 428, and cysteine 363–cysteine 430.

The protein belongs to the TGF-beta family. As to quaternary structure, homodimer; disulfide-linked. Interacts with SOSTDC1. Interacts with TWSG1. Interacts with FBN1 (via N-terminal domain) and FBN2. Interacts with type I receptor ACVR1. Interacts with type II receptor ACVR2A. Interacts with NOG; this interaction inhibits canonical BMP signaling. Interacts with SCUBE3. Interacts with ERFE; the interaction inhibits BMP-induced transcription of HAMP. Interacts with TGFBR3. Post-translationally, several N-termini starting at positions 293, 300, 315 and 316 have been identified by direct sequencing resulting in secretion of different mature forms. Expressed in the kidney and bladder. Lower levels seen in the brain.

Its subcellular location is the secreted. Growth factor of the TGF-beta superfamily that plays important role in various biological processes, including embryogenesis, hematopoiesis, neurogenesis and skeletal morphogenesis. Initiates the canonical BMP signaling cascade by associating with type I receptor ACVR1 and type II receptor ACVR2A. Once all three components are bound together in a complex at the cell surface, ACVR2A phosphorylates and activates ACVR1. In turn, ACVR1 propagates signal by phosphorylating SMAD1/5/8 that travel to the nucleus and act as activators and repressors of transcription of target genes. For specific functions such as growth cone collapse in developing spinal neurons and chemotaxis of monocytes, also uses BMPR2 as type II receptor. Can also signal through non-canonical pathways such as P38 MAP kinase signaling cascade that promotes brown adipocyte differentiation through activation of target genes, including members of the SOX family of transcription factors. Promotes the expression of HAMP, this is repressed by its interaction with ERFE. This chain is Bone morphogenetic protein 7 (BMP7), found in Homo sapiens (Human).